Here is a 497-residue protein sequence, read N- to C-terminus: Guanosine-5'-triphosphate,3'-diphosphate pyrophosphatase (497 aa).

This sequence belongs to the GppA/Ppx family. GppA subfamily.

The catalysed reaction is guanosine 3'-diphosphate 5'-triphosphate + H2O = guanosine 3',5'-bis(diphosphate) + phosphate + H(+). It functions in the pathway purine metabolism; ppGpp biosynthesis; ppGpp from GTP: step 2/2. Catalyzes the conversion of pppGpp to ppGpp. Guanosine pentaphosphate (pppGpp) is a cytoplasmic signaling molecule which together with ppGpp controls the 'stringent response', an adaptive process that allows bacteria to respond to amino acid starvation, resulting in the coordinated regulation of numerous cellular activities. The polypeptide is Guanosine-5'-triphosphate,3'-diphosphate pyrophosphatase (Vibrio parahaemolyticus serotype O3:K6 (strain RIMD 2210633)).